The primary structure comprises 148 residues: NADH-quinone oxidoreductase subunit C (148 aa).

This sequence belongs to the complex I 30 kDa subunit family. In terms of assembly, NDH-1 is composed of 14 different subunits. Subunits NuoB, C, D, E, F, and G constitute the peripheral sector of the complex.

The protein resides in the cell membrane. It carries out the reaction a quinone + NADH + 5 H(+)(in) = a quinol + NAD(+) + 4 H(+)(out). In terms of biological role, NDH-1 shuttles electrons from NADH, via FMN and iron-sulfur (Fe-S) centers, to quinones in the respiratory chain. The immediate electron acceptor for the enzyme in this species is believed to be a menaquinone. Couples the redox reaction to proton translocation (for every two electrons transferred, four hydrogen ions are translocated across the cytoplasmic membrane), and thus conserves the redox energy in a proton gradient. The chain is NADH-quinone oxidoreductase subunit C from Moorella thermoacetica (strain ATCC 39073 / JCM 9320).